The sequence spans 930 residues: Protein translocase subunit SecA (930 aa).

Residues Gln83, 101–105 (GEGKT), and Asp491 each bind ATP.

The protein belongs to the SecA family. As to quaternary structure, monomer and homodimer. Part of the essential Sec protein translocation apparatus which comprises SecA, SecYEG and auxiliary proteins SecDF. Other proteins may also be involved.

The protein resides in the cell inner membrane. It localises to the cellular thylakoid membrane. It is found in the cytoplasm. The catalysed reaction is ATP + H2O + cellular proteinSide 1 = ADP + phosphate + cellular proteinSide 2.. In terms of biological role, part of the Sec protein translocase complex. Interacts with the SecYEG preprotein conducting channel. Has a central role in coupling the hydrolysis of ATP to the transfer of proteins into and across the cell membrane, serving as an ATP-driven molecular motor driving the stepwise translocation of polypeptide chains across the membrane. Probably participates in protein translocation into and across both the cytoplasmic and thylakoid membranes in cyanobacterial cells. In Nostoc sp. (strain PCC 7120 / SAG 25.82 / UTEX 2576), this protein is Protein translocase subunit SecA.